We begin with the raw amino-acid sequence, 939 residues long: Intimin (939 aa).

A signal peptide spans Met1–Gly41. The segment at Asn40–Thr153 is peptidoglycan-binding. Residues Asn40–Thr153 are sufficient for homodimerization. The tract at residues Asn40 to Thr212 is required for periplasmic localization. Residues Leu63 to Leu112 enclose the LysM domain. The segment at Asp189–Leu430 is inverse autotransporter. The segment at Leu402–Phe411 is signature sequence for beta-barrel assembly machinery (BAM), which recognizes the unfolded beta-barrel in the periplasm. 2 consecutive Big-1 domains span residues Val560–Val653 and Ile660–Phe751. The required and sufficient for interaction with intimin receptor Tir stretch occupies residues Phe750–Lys939. The tract at residues Leu842–Lys939 is C-type lectin domain. The segment at Leu842–Lys939 is intimin receptor Tir-binding. A disulfide bond links Cys860 and Cys937.

This sequence belongs to the intimin/invasin family. As to quaternary structure, homodimer. Interacts with Tir.

The protein resides in the cell outer membrane. Functionally, an inverse autotransporter. Adhesin, which mediates attachment to the human intestine epithelial cells. Necessary for the production of attaching and effacing lesions on infected human tissue culture cells. Anchored to the outer membrane by binding to peptidoglycan (PGN) via its periplasmic domain, thus helping in receptor interactions during host invasion. PGN-binding may also aid in resisting mechanical and chemical stress during transit of the bacterium through the gastrointestinal tract of the host. Periplasmic domain binds purified E.coli PGN sacculi under acidic conditions in vitro and in vivo, but does not bind to chitin. Periplasmic domain binds PGN sacculi with an apparent dissociation constant (Kd) of 0.8 uM. No binding to PGN in vitro at normal physiological pH 7.4. The sequence is that of Intimin from Escherichia coli O127:H6 (strain E2348/69 / EPEC).